Reading from the N-terminus, the 190-residue chain is Sec-independent protein translocase protein TatB (190 aa).

Residues 2–22 (LPDIGGTELLVIAAVALIVVG) form a helical membrane-spanning segment. The tract at residues 130 to 190 (IVSKPARKPP…KASTNSDITS (61 aa)) is disordered. Residues 134–144 (PARKPPAKKAA) are compositionally biased toward basic residues. A compositionally biased stretch (low complexity) spans 145-163 (AKPAAKAELVSKPKASAKA).

This sequence belongs to the TatB family. In terms of assembly, the Tat system comprises two distinct complexes: a TatABC complex, containing multiple copies of TatA, TatB and TatC subunits, and a separate TatA complex, containing only TatA subunits. Substrates initially bind to the TatABC complex, which probably triggers association of the separate TatA complex to form the active translocon.

Its subcellular location is the cell inner membrane. In terms of biological role, part of the twin-arginine translocation (Tat) system that transports large folded proteins containing a characteristic twin-arginine motif in their signal peptide across membranes. Together with TatC, TatB is part of a receptor directly interacting with Tat signal peptides. TatB may form an oligomeric binding site that transiently accommodates folded Tat precursor proteins before their translocation. The sequence is that of Sec-independent protein translocase protein TatB from Caulobacter sp. (strain K31).